Here is a 500-residue protein sequence, read N- to C-terminus: uncharacterized protein (500 aa).

This is an uncharacterized protein from Halorubrum sp. PV6 (HRPV-1).